A 481-amino-acid polypeptide reads, in one-letter code: MATKQEEQANLSDVLTPSMSLTELEMKFADETDGKAKDVVQARIKKAEDGILPLRLQFNDFTQIMSSLDEERYANVSKQEKFQMIRSKVLGLTERLQELSNDFEELQPLFATVGEYSKTYKNKNFQVLENLASYNHRGKAGASISNSTPTPAAATPTTAPTPGAGTKKAAKTAPTPTATATIGTPSNNAPTPATTATTPGTQAKKPRKPRQTKKQQQAAAAAAAVAQAQAQAQAQAQNQNQNNMQNKNISNPGMNSNMGTPVMGNPNMKQMQSPIPANAMNNMNVPHNGAMRPSVPNGNMGNPSMGNLNMNAPNMGNPNMNNPNMNNPNAMMSPMAGQGQLNQMFPMQNHNQNGQFMGQQSPGPNIGQMQFPPNNGNMNGMPGTSDMNLGMNPSMNMNMGMNLNQITPANILSMNTKGKDDQMQNIGMDQNQNQNQSQNQSQNQNQSMNMNMNNDSNNPKSAYDLVDFNSLDLSSLNMDFL.

Residues 79 to 107 (QEKFQMIRSKVLGLTERLQELSNDFEELQ) are a coiled coil. 2 disordered regions span residues 140 to 261 (AGAS…MGTP) and 415 to 463 (NTKG…KSAY). A compositionally biased stretch (low complexity) spans 148 to 203 (TPTPAAATPTTAPTPGAGTKKAAKTAPTPTATATIGTPSNNAPTPATTATTPGTQA). Residues 204-213 (KKPRKPRQTK) are compositionally biased toward basic residues. Residues 214–248 (KQQQAAAAAAAVAQAQAQAQAQAQNQNQNNMQNKN) are compositionally biased toward low complexity. Positions 249–259 (ISNPGMNSNMG) are enriched in polar residues. The span at 428-458 (MDQNQNQNQSQNQSQNQNQSMNMNMNNDSNN) shows a compositional bias: low complexity.

Belongs to the Mediator complex subunit 3 family. In terms of assembly, component of the Mediator complex.

Its subcellular location is the nucleus. Its function is as follows. Component of the Mediator complex, a coactivator involved in regulated gene transcription of nearly all RNA polymerase II-dependent genes. Mediator functions as a bridge to convey information from gene-specific regulatory proteins to the basal RNA polymerase II transcription machinery. Mediator is recruited to promoters by direct interactions with regulatory proteins and serves as a scaffold for the assembly of a functional preinitiation complex with RNA polymerase II and the general transcription factors. This is Mediator of RNA polymerase II transcription subunit 3 (PGD1) from Candida glabrata (strain ATCC 2001 / BCRC 20586 / JCM 3761 / NBRC 0622 / NRRL Y-65 / CBS 138) (Yeast).